A 77-amino-acid chain; its full sequence is Large ribosomal subunit protein uL29 (77 aa).

It belongs to the universal ribosomal protein uL29 family.

This Mycobacterium bovis (strain ATCC BAA-935 / AF2122/97) protein is Large ribosomal subunit protein uL29 (rpmC).